A 157-amino-acid polypeptide reads, in one-letter code: 2-C-methyl-D-erythritol 2,4-cyclodiphosphate synthase (157 aa).

The a divalent metal cation site is built by aspartate 8 and histidine 10. 4-CDP-2-C-methyl-D-erythritol 2-phosphate-binding positions include aspartate 8–histidine 10 and histidine 34–serine 35. Histidine 42 contributes to the a divalent metal cation binding site. Residues aspartate 56–glycine 58, phenylalanine 61–aspartate 65, alanine 100–leucine 106, threonine 132–glutamate 135, phenylalanine 139, and arginine 142 each bind 4-CDP-2-C-methyl-D-erythritol 2-phosphate.

It belongs to the IspF family. As to quaternary structure, homotrimer. It depends on a divalent metal cation as a cofactor.

The enzyme catalyses 4-CDP-2-C-methyl-D-erythritol 2-phosphate = 2-C-methyl-D-erythritol 2,4-cyclic diphosphate + CMP. Its pathway is isoprenoid biosynthesis; isopentenyl diphosphate biosynthesis via DXP pathway; isopentenyl diphosphate from 1-deoxy-D-xylulose 5-phosphate: step 4/6. Functionally, involved in the biosynthesis of isopentenyl diphosphate (IPP) and dimethylallyl diphosphate (DMAPP), two major building blocks of isoprenoid compounds. Catalyzes the conversion of 4-diphosphocytidyl-2-C-methyl-D-erythritol 2-phosphate (CDP-ME2P) to 2-C-methyl-D-erythritol 2,4-cyclodiphosphate (ME-CPP) with a corresponding release of cytidine 5-monophosphate (CMP). This Photorhabdus laumondii subsp. laumondii (strain DSM 15139 / CIP 105565 / TT01) (Photorhabdus luminescens subsp. laumondii) protein is 2-C-methyl-D-erythritol 2,4-cyclodiphosphate synthase.